Consider the following 342-residue polypeptide: Ribosomal RNA small subunit methyltransferase C (342 aa).

Belongs to the methyltransferase superfamily. RsmC family. As to quaternary structure, monomer.

Its subcellular location is the cytoplasm. The enzyme catalyses guanosine(1207) in 16S rRNA + S-adenosyl-L-methionine = N(2)-methylguanosine(1207) in 16S rRNA + S-adenosyl-L-homocysteine + H(+). In terms of biological role, specifically methylates the guanine in position 1207 of 16S rRNA in the 30S particle. The sequence is that of Ribosomal RNA small subunit methyltransferase C from Enterobacter sp. (strain 638).